Here is a 214-residue protein sequence, read N- to C-terminus: Urease accessory protein UreG (214 aa).

A disordered region spans residues 1–20 (MSQLHAVPGRTKKLPPLRVG). GTP is bound at residue 23–30 (GPVGSGKT).

It belongs to the SIMIBI class G3E GTPase family. UreG subfamily. Homodimer. UreD, UreF and UreG form a complex that acts as a GTP-hydrolysis-dependent molecular chaperone, activating the urease apoprotein by helping to assemble the nickel containing metallocenter of UreC. The UreE protein probably delivers the nickel.

Its subcellular location is the cytoplasm. Functionally, facilitates the functional incorporation of the urease nickel metallocenter. This process requires GTP hydrolysis, probably effectuated by UreG. This Leptothrix cholodnii (strain ATCC 51168 / LMG 8142 / SP-6) (Leptothrix discophora (strain SP-6)) protein is Urease accessory protein UreG.